The primary structure comprises 593 residues: Numb-related protein 1 (593 aa).

4 disordered regions span residues 1–97 (MSAS…WQPD), 235–278 (TAQV…NSRS), 331–375 (LRQG…FGTQ), and 493–581 (MSMS…DPFD). S17 carries the post-translational modification Phosphoserine; by PKC. The segment covering 27-37 (QNSLVSEQQPS) has biased composition (polar residues). The span at 64 to 74 (RSLRLPKKRRD) shows a compositional bias: basic residues. S65 carries the post-translational modification Phosphoserine; by PKC. The PID domain maps to 102-255 (RTGTCCFNVK…STSSTPPKDI (154 aa)). Polar residues-rich tracts occupy residues 236–251 (AQVNVQSAQESTSSTP), 261–278 (EDNTSEGTSTQNPSNSRS), and 354–364 (SLRTVSNNPTE). Over residues 493–511 (MSMSPTSPSSDPPSTSSYS) the composition is skewed to low complexity. Residues 516–528 (SGPPPAHAPPPLP) show a composition bias toward pro residues. Residues 532–565 (AVSNGSPSIYQQQLQQANSTRNSPAGINWNSSPN) show a composition bias toward polar residues.

In terms of assembly, interacts with pkc-3. Expressed in cells comprising the intestine, pharyngeal cells, the anal sphincter and depressor muscles.

The protein resides in the cytoplasm. It is found in the cell cortex. The protein localises to the cytoskeleton. It localises to the membrane. Its function is as follows. Involved in the tethering and targeting of pkc-3 to modulate the intracellular distribution of the kinase. The complex formed with pkc-3 complexes are likely to be involved in assembly, maintenance, and/or regulation of protein complexes that execute asymmetric and/or polarized cell functions. The chain is Numb-related protein 1 from Caenorhabditis elegans.